The primary structure comprises 192 residues: uncharacterized protein (192 aa).

The signal sequence occupies residues 1–24; sequence MSGVLSCVLRACACAGLCCWVCMG. The segment at 140–192 is disordered; sequence RAGADEGAGGNAAGCPEDTRGFARSPGDLMGGMNGDLGDEGETGEGGDNGAGE.

This is an uncharacterized protein from Human herpesvirus 6A (strain Uganda-1102) (HHV-6 variant A).